Reading from the N-terminus, the 2410-residue chain is Reducing polyketide synthase FUB1 (2410 aa).

Low complexity predominate over residues 1–42 (MTLSNGSNGANGTSNGNGAHPSANGFHNAANGGANNGSANGG). A disordered region spans residues 1 to 52 (MTLSNGSNGANGTSNGNGAHPSANGFHNAANGGANNGSANGGAEHDAGRPQV). The 423-residue stretch at 57 to 479 (SSAIAVIGVS…GANAHAVLDD (423 aa)) folds into the Ketosynthase family 3 (KS3) domain. Residues cysteine 230, histidine 365, and histidine 403 each act as for beta-ketoacyl synthase activity in the active site. The segment at 608–929 (TFIFTGQGAQ…FSAIKRKQDA (322 aa)) is malonyl-CoA:ACP transacylase (MAT) domain. Serine 699 serves as the catalytic For malonyltransferase activity. The tract at residues 994–1127 (LELLGVRDPR…GLVSTSYKHD (134 aa)) is N-terminal hotdog fold. The 314-residue stretch at 994–1307 (LELLGVRDPR…TVPLRGASDS (314 aa)) folds into the PKS/mFAS DH domain. The tract at residues 995-1302 (ELLGVRDPRS…LKGCKTVPLR (308 aa)) is dehydratase (DH) domain. The active-site Proton acceptor; for dehydratase activity is the histidine 1026. The interval 1155 to 1307 (LPSVDPTVFY…TVPLRGASDS (153 aa)) is C-terminal hotdog fold. Aspartate 1220 serves as the catalytic Proton donor; for dehydratase activity. An enoyl reductase (ER) domain region spans residues 1714 to 2026 (GLLDTLEYLS…SGGHVGKIVL (313 aa)). The interval 2050 to 2226 (ATYVLIGGLG…AATSINLSLV (177 aa)) is ketoreductase (KR) domain. The 78-residue stretch at 2329-2406 (EVYEIVLQQL…GFTKKVMAKS (78 aa)) folds into the Carrier domain. An O-(pantetheine 4'-phosphoryl)serine modification is found at serine 2366.

Its pathway is mycotoxin biosynthesis. Reducing polyketide synthase; part of the gene cluster that mediates the biosynthesis of fusaric acid, a mycotoxin with low to moderate toxicity to animals and humans, but with high phytotoxic properties. L-aspartate is suggested as fusaric acid amino acid precursor that is activated and further processed to O-acetyl-L-homoserine by cluster enzymes aspartate kinase FUB3 and homoserine O-acetyltransferase FUB5, as well as enzymes of the primary metabolism. The polyketide synthase (PKS) FUB1 generates the triketide trans-2-hexenal which is presumptively released by the hydrolase FUB4 and linked to the NRPS-bound amino acid precursor by NAD(P)-dependent dehydrogenase FUB6. FUB1, FUB4, and the non-canonical NRPS Fub8 may form an enzyme complex. Further processing of the NRPS-bound intermediate might be carried out by FUB6 and the sulfhydrylase FUB7, enabling a spontaneous electrocyclization to close the carbon backbone of fusaric acid. Dihydrofusaric acid is likely to be released via reduction by the thioester reductase (TR) domain of FUB8 whereupon the final oxidation to fusaric acid may (also) be performed by the FMN-dependent dehydrogenase FUB9. This Gibberella fujikuroi (strain CBS 195.34 / IMI 58289 / NRRL A-6831) (Bakanae and foot rot disease fungus) protein is Reducing polyketide synthase FUB1.